Here is a 391-residue protein sequence, read N- to C-terminus: Metallophosphoesterase 1 (391 aa).

Residues 25-45 (TVVIISVLLFCEYFIYHLVIF) traverse the membrane as a helical segment. A divalent metal cation contacts are provided by D72, D114, N152, H244, H298, and H300. A helical transmembrane segment spans residues 352–372 (VLATYGAAAVFLVVLILAHLE).

This sequence belongs to the metallophosphoesterase superfamily. MPPE1 family. In terms of assembly, interacts with GPI-anchor proteins (via the GPI portion). Interacts with TMED10. It depends on Mn(2+) as a cofactor.

The protein resides in the endoplasmic reticulum-Golgi intermediate compartment membrane. Its function is as follows. Metallophosphoesterase that catalyzes the removal of a side-chain ethanolamine-phosphate (EtNP) from the second mannose of the GPI-anchor protein intermediate. Participates in the glycan remodeling steps of GPI-anchor maturation to allow an efficient transport of GPI-anchor proteins from the endoplasmic reticulum to the Golgi. The polypeptide is Metallophosphoesterase 1 (Cricetulus griseus (Chinese hamster)).